Consider the following 380-residue polypeptide: Cytochrome b (380 aa).

4 helical membrane-spanning segments follow: residues 34–54 (FGSL…LLAM), 78–99 (WLIR…YMHI), 114–134 (WNTG…GYVL), and 179–199 (FFAL…IHLT). Heme b contacts are provided by H84 and H98. The heme b site is built by H183 and H197. H202 lines the a ubiquinone pocket. A run of 4 helical transmembrane segments spans residues 227-247 (LKDI…ALFT), 289-309 (LGGV…PLLH), 321-341 (LSQS…WVGS), and 348-368 (FIII…ILLP).

Belongs to the cytochrome b family. The cytochrome bc1 complex contains 11 subunits: 3 respiratory subunits (MT-CYB, CYC1 and UQCRFS1), 2 core proteins (UQCRC1 and UQCRC2) and 6 low-molecular weight proteins (UQCRH/QCR6, UQCRB/QCR7, UQCRQ/QCR8, UQCR10/QCR9, UQCR11/QCR10 and a cleavage product of UQCRFS1). This cytochrome bc1 complex then forms a dimer. Heme b is required as a cofactor.

The protein localises to the mitochondrion inner membrane. Component of the ubiquinol-cytochrome c reductase complex (complex III or cytochrome b-c1 complex) that is part of the mitochondrial respiratory chain. The b-c1 complex mediates electron transfer from ubiquinol to cytochrome c. Contributes to the generation of a proton gradient across the mitochondrial membrane that is then used for ATP synthesis. The sequence is that of Cytochrome b (MT-CYB) from Falco peregrinus (Peregrine falcon).